The following is a 48-amino-acid chain: Sperm protamine P1 (48 aa).

This sequence belongs to the protamine P1 family. Testis.

The protein resides in the nucleus. It localises to the chromosome. Protamines substitute for histones in the chromatin of sperm during the haploid phase of spermatogenesis. They compact sperm DNA into a highly condensed, stable and inactive complex. This Murina cyclotis (Round-eared tube-nosed bat) protein is Sperm protamine P1 (PRM1).